The sequence spans 322 residues: Probable transposase for insertion sequence element ISA1214 (322 aa).

Belongs to the transposase 11 family.

In terms of biological role, involved in the transposition of the insertion sequence ISA1214. The polypeptide is Probable transposase for insertion sequence element ISA1214 (Archaeoglobus fulgidus (strain ATCC 49558 / DSM 4304 / JCM 9628 / NBRC 100126 / VC-16)).